The following is a 476-amino-acid chain: Methylenetetrahydrofolate--tRNA-(uracil-5-)-methyltransferase TrmFO (476 aa).

13 to 18 (GGGLAG) lines the FAD pocket. The interval 425–446 (PPLESPPTHGADGKKLRGPDKT) is disordered. Positions 435-446 (ADGKKLRGPDKT) are enriched in basic and acidic residues.

It belongs to the MnmG family. TrmFO subfamily. FAD is required as a cofactor.

The protein localises to the cytoplasm. It catalyses the reaction uridine(54) in tRNA + (6R)-5,10-methylene-5,6,7,8-tetrahydrofolate + NADH + H(+) = 5-methyluridine(54) in tRNA + (6S)-5,6,7,8-tetrahydrofolate + NAD(+). The catalysed reaction is uridine(54) in tRNA + (6R)-5,10-methylene-5,6,7,8-tetrahydrofolate + NADPH + H(+) = 5-methyluridine(54) in tRNA + (6S)-5,6,7,8-tetrahydrofolate + NADP(+). Catalyzes the folate-dependent formation of 5-methyl-uridine at position 54 (M-5-U54) in all tRNAs. This is Methylenetetrahydrofolate--tRNA-(uracil-5-)-methyltransferase TrmFO from Rhodopseudomonas palustris (strain BisB18).